Reading from the N-terminus, the 143-residue chain is Putative cytokinin riboside 5'-monophosphate phosphoribohydrolase LOG9 (143 aa).

Residues 23–24 (RK), 41–47 (RYETMEE), and threonine 53 contribute to the substrate site.

The protein belongs to the LOG family.

The catalysed reaction is N(6)-(dimethylallyl)adenosine 5'-phosphate + H2O = N(6)-dimethylallyladenine + D-ribose 5-phosphate. It catalyses the reaction 9-ribosyl-trans-zeatin 5'-phosphate + H2O = trans-zeatin + D-ribose 5-phosphate. Functionally, cytokinin-activating enzyme working in the direct activation pathway. Phosphoribohydrolase that converts inactive cytokinin nucleotides to the biologically active free-base forms. This Arabidopsis thaliana (Mouse-ear cress) protein is Putative cytokinin riboside 5'-monophosphate phosphoribohydrolase LOG9 (LOG9).